The sequence spans 261 residues: Kallikrein 1-related peptidase b16 (261 aa).

A signal peptide spans Met1–Ala18. The propeptide at Pro19–Arg24 is activation peptide. The 234-residue stretch at Ile25–Met258 folds into the Peptidase S1 domain. 5 disulfide bridges follow: Cys31–Cys173, Cys50–Cys66, Cys152–Cys219, Cys184–Cys198, and Cys209–Cys234. His65 acts as the Charge relay system in catalysis. Asn102 carries an N-linked (GlcNAc...) asparagine glycan. The Charge relay system role is filled by Asp120. Catalysis depends on Ser213, which acts as the Charge relay system.

Belongs to the peptidase S1 family. Kallikrein subfamily.

The enzyme catalyses Cleavage of the Leu-|-Leu bond in synthetic tetradecapeptide renin substrate, to produce angiotensin I, but not active on natural angiotensinogen. Also hydrolyzes Bz-Arg-p-nitroanilide.. The protein is Kallikrein 1-related peptidase b16 (Klk1b16) of Mus musculus (Mouse).